The primary structure comprises 346 residues: NADH-ubiquinone oxidoreductase chain 2 (346 aa).

11 helical membrane-spanning segments follow: residues 1–21 (MNPH…TITI), 25–45 (HWVL…PLIS), 60–80 (FLTQ…NAWA), 95–115 (CLLL…HFWF), 124–144 (LMTA…LLLM), 149–169 (LNPA…GWMG), 178–195 (ILAF…IILV), 200–219 (LALL…FMAL), 242–262 (ATLM…GFMP), 274–294 (EMTP…FFYL), and 326–346 (AILA…HAIV).

This sequence belongs to the complex I subunit 2 family.

Its subcellular location is the mitochondrion inner membrane. The catalysed reaction is a ubiquinone + NADH + 5 H(+)(in) = a ubiquinol + NAD(+) + 4 H(+)(out). Functionally, core subunit of the mitochondrial membrane respiratory chain NADH dehydrogenase (Complex I) that is believed to belong to the minimal assembly required for catalysis. Complex I functions in the transfer of electrons from NADH to the respiratory chain. The immediate electron acceptor for the enzyme is believed to be ubiquinone. The chain is NADH-ubiquinone oxidoreductase chain 2 (MT-ND2) from Sibirionetta formosa (Baikal teal).